Consider the following 279-residue polypeptide: Thymidylate synthase (279 aa).

133 to 134 (RR) provides a ligand contact to dUMP. The active-site Nucleophile is the Cys-154. DUMP is bound by residues 178 to 181 (RSND), Asn-189, and 219 to 221 (HIY). Position 181 (Asp-181) interacts with (6R)-5,10-methylene-5,6,7,8-tetrahydrofolate. Ala-278 serves as a coordination point for (6R)-5,10-methylene-5,6,7,8-tetrahydrofolate.

This sequence belongs to the thymidylate synthase family. Bacterial-type ThyA subfamily. In terms of assembly, homodimer.

It is found in the cytoplasm. It carries out the reaction dUMP + (6R)-5,10-methylene-5,6,7,8-tetrahydrofolate = 7,8-dihydrofolate + dTMP. Its pathway is pyrimidine metabolism; dTTP biosynthesis. Its function is as follows. Catalyzes the reductive methylation of 2'-deoxyuridine-5'-monophosphate (dUMP) to 2'-deoxythymidine-5'-monophosphate (dTMP) while utilizing 5,10-methylenetetrahydrofolate (mTHF) as the methyl donor and reductant in the reaction, yielding dihydrofolate (DHF) as a by-product. This enzymatic reaction provides an intracellular de novo source of dTMP, an essential precursor for DNA biosynthesis. This Streptococcus pyogenes serotype M6 (strain ATCC BAA-946 / MGAS10394) protein is Thymidylate synthase.